Here is a 208-residue protein sequence, read N- to C-terminus: Protein-L-isoaspartate O-methyltransferase (208 aa).

Residue Ser-59 is part of the active site.

The protein belongs to the methyltransferase superfamily. L-isoaspartyl/D-aspartyl protein methyltransferase family.

It localises to the cytoplasm. The catalysed reaction is [protein]-L-isoaspartate + S-adenosyl-L-methionine = [protein]-L-isoaspartate alpha-methyl ester + S-adenosyl-L-homocysteine. Functionally, catalyzes the methyl esterification of L-isoaspartyl residues in peptides and proteins that result from spontaneous decomposition of normal L-aspartyl and L-asparaginyl residues. It plays a role in the repair and/or degradation of damaged proteins. In Photorhabdus laumondii subsp. laumondii (strain DSM 15139 / CIP 105565 / TT01) (Photorhabdus luminescens subsp. laumondii), this protein is Protein-L-isoaspartate O-methyltransferase.